The sequence spans 234 residues: Sugar fermentation stimulation protein homolog (234 aa).

This sequence belongs to the SfsA family.

This is Sugar fermentation stimulation protein homolog from Shewanella loihica (strain ATCC BAA-1088 / PV-4).